The following is a 549-amino-acid chain: Dicarboxylate transporter 2.2, chloroplastic (549 aa).

Residues 1–54 (MESLALRSISLSASYLSLHRSSSKSFALLPPSISVHTSPTLRSLSISSPRFTLR) constitute a chloroplast transit peptide. A disordered region spans residues 57 to 79 (ASSLPEEQNKPQPPPPSPPQPQG). The span at 67–77 (PQPPPPSPPQP) shows a compositional bias: pro residues. A run of 12 helical transmembrane segments spans residues 79–99 (GAKL…RFLI), 115–135 (IFLF…AWAF), 151–171 (TAFA…FFFA), 220–240 (AGGV…SYPG), 247–267 (LGSF…AILL), 294–314 (WFKV…LIIY), 344–364 (NEWI…FGEA), 365–385 (IGIA…LLGV), 403–423 (WFAV…VAWM), 436–456 (LTWP…HYLF), 470–490 (FLAM…CLAF), and 523–543 (VGFV…SFWW).

This sequence belongs to the SLC13A/DASS transporter (TC 2.A.47) family. DIT1 subfamily. In terms of tissue distribution, expressed in roots, rosette and cauline leaves, stems, flowers and siliques.

It localises to the plastid. It is found in the chloroplast inner membrane. In terms of biological role, may be involved in the transport of dicarboxylate compounds. The polypeptide is Dicarboxylate transporter 2.2, chloroplastic (DIT2-2) (Arabidopsis thaliana (Mouse-ear cress)).